Here is a 127-residue protein sequence, read N- to C-terminus: Small ribosomal subunit protein uS11 (127 aa).

The protein belongs to the universal ribosomal protein uS11 family. In terms of assembly, part of the 30S ribosomal subunit. Interacts with proteins S7 and S18. Binds to IF-3.

Located on the platform of the 30S subunit, it bridges several disparate RNA helices of the 16S rRNA. Forms part of the Shine-Dalgarno cleft in the 70S ribosome. This chain is Small ribosomal subunit protein uS11, found in Ruthia magnifica subsp. Calyptogena magnifica.